We begin with the raw amino-acid sequence, 229 residues long: Type III pantothenate kinase (229 aa).

7–14 (DVGNSSVD) is an ATP binding site. Residues Tyr-78 and 85 to 88 (GTDR) each bind substrate. Asp-87 serves as the catalytic Proton acceptor. Residue Thr-110 participates in ATP binding. Thr-161 serves as a coordination point for substrate.

This sequence belongs to the type III pantothenate kinase family. As to quaternary structure, homodimer. Requires NH4(+) as cofactor. It depends on K(+) as a cofactor.

It is found in the cytoplasm. It catalyses the reaction (R)-pantothenate + ATP = (R)-4'-phosphopantothenate + ADP + H(+). Its pathway is cofactor biosynthesis; coenzyme A biosynthesis; CoA from (R)-pantothenate: step 1/5. Functionally, catalyzes the phosphorylation of pantothenate (Pan), the first step in CoA biosynthesis. The polypeptide is Type III pantothenate kinase (Aquifex aeolicus (strain VF5)).